The primary structure comprises 393 residues: NAD(P)H-quinone oxidoreductase subunit H, chloroplastic (393 aa).

The protein belongs to the complex I 49 kDa subunit family. As to quaternary structure, NDH is composed of at least 16 different subunits, 5 of which are encoded in the nucleus.

It localises to the plastid. It is found in the chloroplast thylakoid membrane. The catalysed reaction is a plastoquinone + NADH + (n+1) H(+)(in) = a plastoquinol + NAD(+) + n H(+)(out). It catalyses the reaction a plastoquinone + NADPH + (n+1) H(+)(in) = a plastoquinol + NADP(+) + n H(+)(out). In terms of biological role, NDH shuttles electrons from NAD(P)H:plastoquinone, via FMN and iron-sulfur (Fe-S) centers, to quinones in the photosynthetic chain and possibly in a chloroplast respiratory chain. The immediate electron acceptor for the enzyme in this species is believed to be plastoquinone. Couples the redox reaction to proton translocation, and thus conserves the redox energy in a proton gradient. This chain is NAD(P)H-quinone oxidoreductase subunit H, chloroplastic, found in Olimarabidopsis pumila (Dwarf rocket).